A 181-amino-acid chain; its full sequence is Translationally-controlled tumor protein homolog (181 aa).

The 181-residue stretch at 1–181 (MLIFKDAFTD…VKEALVEEKQ (181 aa)) folds into the TCTP domain.

It belongs to the TCTP family.

The protein localises to the cytoplasm. In terms of biological role, involved in calcium binding and microtubule stabilization. This Wuchereria bancrofti protein is Translationally-controlled tumor protein homolog.